Consider the following 242-residue polypeptide: MANPDTIFSTPIDKIGDFTFDERVAEVFPDMIQRSIPGYSNIISAIGMLAERYAKPHSNVYDLGCSLGAATLSMRRSIDQEGCQIIGVDNSSAMVERCRLLINAYRSDTPVTILEADIRDVDIQDASVVVLNFTLQFLAPADRHALLEKIYAGLRPGGILILSEKYIFEDENANELLIDLHHDFKRANGYSELEISQKRSAIENVMLPDTIDVHKKRFNEIGFKSSEVWFQCFNFGSMFAIK.

S-adenosyl-L-methionine is bound by residues Tyr-39, 64–66, 89–90, 117–118, Asn-132, and Arg-199; these read GCS, DN, and DI.

It belongs to the class I-like SAM-binding methyltransferase superfamily. Cx-SAM synthase family. As to quaternary structure, homodimer.

It carries out the reaction prephenate + S-adenosyl-L-methionine = carboxy-S-adenosyl-L-methionine + 3-phenylpyruvate + H2O. Its function is as follows. Catalyzes the conversion of S-adenosyl-L-methionine (SAM) to carboxy-S-adenosyl-L-methionine (Cx-SAM). This Aliivibrio fischeri (strain ATCC 700601 / ES114) (Vibrio fischeri) protein is Carboxy-S-adenosyl-L-methionine synthase.